Reading from the N-terminus, the 106-residue chain is Large ribosomal subunit protein uL24 (106 aa).

It belongs to the universal ribosomal protein uL24 family. As to quaternary structure, part of the 50S ribosomal subunit.

Its function is as follows. One of two assembly initiator proteins, it binds directly to the 5'-end of the 23S rRNA, where it nucleates assembly of the 50S subunit. Functionally, one of the proteins that surrounds the polypeptide exit tunnel on the outside of the subunit. The polypeptide is Large ribosomal subunit protein uL24 (Paracidovorax citrulli (strain AAC00-1) (Acidovorax citrulli)).